A 452-amino-acid chain; its full sequence is uncharacterized protein (452 aa).

The next 14 membrane-spanning stretches (helical) occupy residues 8–28, 39–59, 77–97, 100–122, 134–156, 161–183, 203–222, 226–243, 266–286, 302–322, 330–350, 359–379, 393–415, and 425–447; these read AVFL…SSMI, FHLS…ASAV, FLFG…APTF, LLVM…VGLI, LAVL…GFLI, WPAI…LYMF, LGIV…LLSF, PHAV…AFVW, AVYV…FGLP, LFML…GKWI, PIFA…IFFI, LILS…QAAM, GLFQ…ILFG, and MMGI…FAAL.

The protein belongs to the major facilitator superfamily.

The protein localises to the cell membrane. This is an uncharacterized protein from Bacillus subtilis (strain 168).